The sequence spans 256 residues: Triosephosphate isomerase (256 aa).

Residue 9–11 coordinates substrate; that stretch reads NWK. The active-site Electrophile is His-95. Glu-167 (proton acceptor) is an active-site residue. Substrate is bound by residues Gly-173, Ser-212, and 233–234; that span reads GG.

Belongs to the triosephosphate isomerase family. Homodimer.

It is found in the cytoplasm. It carries out the reaction D-glyceraldehyde 3-phosphate = dihydroxyacetone phosphate. It functions in the pathway carbohydrate biosynthesis; gluconeogenesis. The protein operates within carbohydrate degradation; glycolysis; D-glyceraldehyde 3-phosphate from glycerone phosphate: step 1/1. Involved in the gluconeogenesis. Catalyzes stereospecifically the conversion of dihydroxyacetone phosphate (DHAP) to D-glyceraldehyde-3-phosphate (G3P). This is Triosephosphate isomerase from Proteus mirabilis (strain HI4320).